Reading from the N-terminus, the 180-residue chain is MSVKIRLQRHGKKGKPFYWVVAADARSKRDGKYLEKIGTYNPNTNPATVDLNLDAAVKWLHNGAQPTDTARAILSYKGALLKHHLDGGVRKGALTQDQADAKLATWIEAKSGKVDAKKEGLTKAQSDAKAKAFKAETVANEKRIATQTEAAKALEAVVEEATTEEVVETATEEANEEKEA.

This sequence belongs to the bacterial ribosomal protein bS16 family.

The protein is Small ribosomal subunit protein bS16 of Flavobacterium psychrophilum (strain ATCC 49511 / DSM 21280 / CIP 103535 / JIP02/86).